The primary structure comprises 917 residues: Phosphoenolpyruvate carboxylase (917 aa).

Active-site residues include histidine 145 and lysine 578.

Belongs to the PEPCase type 1 family. Requires Mg(2+) as cofactor.

It carries out the reaction oxaloacetate + phosphate = phosphoenolpyruvate + hydrogencarbonate. Its function is as follows. Forms oxaloacetate, a four-carbon dicarboxylic acid source for the tricarboxylic acid cycle. This is Phosphoenolpyruvate carboxylase from Azoarcus sp. (strain BH72).